The primary structure comprises 423 residues: Histidine--tRNA ligase 2 (423 aa).

Belongs to the class-II aminoacyl-tRNA synthetase family. Homodimer.

It is found in the cytoplasm. The enzyme catalyses tRNA(His) + L-histidine + ATP = L-histidyl-tRNA(His) + AMP + diphosphate + H(+). This Bacillus cereus (strain ATCC 14579 / DSM 31 / CCUG 7414 / JCM 2152 / NBRC 15305 / NCIMB 9373 / NCTC 2599 / NRRL B-3711) protein is Histidine--tRNA ligase 2.